Consider the following 142-residue polypeptide: Putative pre-16S rRNA nuclease (142 aa).

This sequence belongs to the YqgF nuclease family.

It localises to the cytoplasm. Functionally, could be a nuclease involved in processing of the 5'-end of pre-16S rRNA. In Staphylococcus haemolyticus (strain JCSC1435), this protein is Putative pre-16S rRNA nuclease.